The primary structure comprises 252 residues: MNKVVVKNVTFGEGAPKICVPMVGKTVAALKEEAEMLQTIDLDVVEWRVDFFEDVKDLAKVEAALDEIRTILPETPILFTFRSAKEGGELAVGDEFYFELNETLASTGKIDLVDVELFNEETDVLRLIETAHKNNVKVVMSNHDFDKTPAKEEIVSRLTRMEALGADLPKIAVMPKSAGDVLTLLDATNTVSEKANQPIITMSMAGTGVISRLAGEVFGSAMTFGAAKKASAPGQIDVNELRHVLDLLHKQF.

Residues 46-48 and Arg-82 contribute to the 3-dehydroquinate site; that span reads EWR. Catalysis depends on His-143, which acts as the Proton donor/acceptor. The Schiff-base intermediate with substrate role is filled by Lys-170. Arg-212, Ser-231, and Gln-235 together coordinate 3-dehydroquinate.

This sequence belongs to the type-I 3-dehydroquinase family. Homodimer.

The catalysed reaction is 3-dehydroquinate = 3-dehydroshikimate + H2O. The protein operates within metabolic intermediate biosynthesis; chorismate biosynthesis; chorismate from D-erythrose 4-phosphate and phosphoenolpyruvate: step 3/7. Functionally, involved in the third step of the chorismate pathway, which leads to the biosynthesis of aromatic amino acids. Catalyzes the cis-dehydration of 3-dehydroquinate (DHQ) and introduces the first double bond of the aromatic ring to yield 3-dehydroshikimate. This Listeria monocytogenes serotype 4b (strain F2365) protein is 3-dehydroquinate dehydratase.